A 612-amino-acid chain; its full sequence is Dihydroxy-acid dehydratase (612 aa).

Residue D81 participates in Mg(2+) binding. [2Fe-2S] cluster is bound at residue C122. Mg(2+) is bound by residues D123 and K124. K124 is modified (N6-carboxylysine). C195 serves as a coordination point for [2Fe-2S] cluster. E491 is a binding site for Mg(2+). The Proton acceptor role is filled by S517.

This sequence belongs to the IlvD/Edd family. In terms of assembly, homodimer. [2Fe-2S] cluster serves as cofactor. Mg(2+) is required as a cofactor.

It catalyses the reaction (2R)-2,3-dihydroxy-3-methylbutanoate = 3-methyl-2-oxobutanoate + H2O. The enzyme catalyses (2R,3R)-2,3-dihydroxy-3-methylpentanoate = (S)-3-methyl-2-oxopentanoate + H2O. Its pathway is amino-acid biosynthesis; L-isoleucine biosynthesis; L-isoleucine from 2-oxobutanoate: step 3/4. It functions in the pathway amino-acid biosynthesis; L-valine biosynthesis; L-valine from pyruvate: step 3/4. Its function is as follows. Functions in the biosynthesis of branched-chain amino acids. Catalyzes the dehydration of (2R,3R)-2,3-dihydroxy-3-methylpentanoate (2,3-dihydroxy-3-methylvalerate) into 2-oxo-3-methylpentanoate (2-oxo-3-methylvalerate) and of (2R)-2,3-dihydroxy-3-methylbutanoate (2,3-dihydroxyisovalerate) into 2-oxo-3-methylbutanoate (2-oxoisovalerate), the penultimate precursor to L-isoleucine and L-valine, respectively. This Rhizobium meliloti (strain 1021) (Ensifer meliloti) protein is Dihydroxy-acid dehydratase.